Consider the following 700-residue polypeptide: Methionine--tRNA ligase (700 aa).

Positions 13-23 match the 'HIGH' region motif; that stretch reads PYANGDIHLGH. Zn(2+) contacts are provided by C144, C147, C157, and C160. The short motif at 341 to 345 is the 'KMSKS' region element; sequence KMSKS. Position 344 (K344) interacts with ATP. One can recognise a tRNA-binding domain in the interval 598 to 700; it reads DFAKVEMKVA…DNCVIGDLLA (103 aa).

This sequence belongs to the class-I aminoacyl-tRNA synthetase family. MetG type 1 subfamily. As to quaternary structure, homodimer. Zn(2+) is required as a cofactor.

It localises to the cytoplasm. It carries out the reaction tRNA(Met) + L-methionine + ATP = L-methionyl-tRNA(Met) + AMP + diphosphate. In terms of biological role, is required not only for elongation of protein synthesis but also for the initiation of all mRNA translation through initiator tRNA(fMet) aminoacylation. The sequence is that of Methionine--tRNA ligase from Psychrobacter arcticus (strain DSM 17307 / VKM B-2377 / 273-4).